Consider the following 169-residue polypeptide: uncharacterized protein (169 aa).

Helical transmembrane passes span 62–84 (RWGFFAGGLIFLVSSAIMYLLGL) and 94–116 (ALMLFVLPTAFLFVSLLLLYWWF).

The protein localises to the cell membrane. This is an uncharacterized protein from Archaeoglobus fulgidus (strain ATCC 49558 / DSM 4304 / JCM 9628 / NBRC 100126 / VC-16).